Reading from the N-terminus, the 173-residue chain is C-type lectin mosGCTL-7 (173 aa).

The first 24 residues, Met1–Ala24, serve as a signal peptide directing secretion. The C-type lectin domain occupies Asn51–Glu167. 2 disulfide bridges follow: Cys59-Cys166 and Cys139-Cys158. Residues Asn119 and Asn144 are each glycosylated (N-linked (GlcNAc...) asparagine).

In terms of assembly, interacts with putative receptor-type tyrosine-protein phosphatase mosPTP-1; the interaction may mediate the recruitment of Japanese encephalitis virus particles in complex with C-type lectin mosGCTL-7 to the cell surface.

The protein resides in the secreted. Carbohydrate-binding protein. Its function is as follows. (Microbial infection) Facilitates Japanese encephalitis virus infection in mosquitoes. The protein is C-type lectin mosGCTL-7 of Culex quinquefasciatus (Southern house mosquito).